Reading from the N-terminus, the 324-residue chain is Viral cathepsin (324 aa).

A signal peptide spans 1–16 (MNKIVLYLLVYGAVQC). Residues 17–113 (AAYDVLKAPN…VVLDRPPDKG (97 aa)) constitute a propeptide, activation peptide. 3 disulfide bridges follow: C134–C175, C168–C208, and C263–C311. Residue C137 is part of the active site. An N-linked (GlcNAc...) asparagine; by host glycan is attached at N159. Active-site residues include H270 and N290.

The protein belongs to the peptidase C1 family. In terms of processing, synthesized as an inactive proenzyme and activated by proteolytic removal of the inhibitory propeptide.

It carries out the reaction Endopeptidase of broad specificity, hydrolyzing substrates of both cathepsin L and cathepsin B.. Cysteine protease that plays an essential role in host liquefaction to facilitate horizontal transmission of the virus. May participate in the degradation of foreign protein expressed by the baculovirus system. This chain is Viral cathepsin (Vcath), found in Choristoneura fumiferana nuclear polyhedrosis virus (CfMNPV).